The following is an 86-amino-acid chain: Large ribosomal subunit protein bL31B (86 aa).

It belongs to the bacterial ribosomal protein bL31 family. Type B subfamily. In terms of assembly, part of the 50S ribosomal subunit.

In Streptococcus agalactiae serotype III (strain NEM316), this protein is Large ribosomal subunit protein bL31B.